A 136-amino-acid polypeptide reads, in one-letter code: Large ribosomal subunit protein uL16 (136 aa).

This sequence belongs to the universal ribosomal protein uL16 family. In terms of assembly, part of the 50S ribosomal subunit.

Its function is as follows. Binds 23S rRNA and is also seen to make contacts with the A and possibly P site tRNAs. This chain is Large ribosomal subunit protein uL16, found in Shigella flexneri.